A 172-amino-acid polypeptide reads, in one-letter code: Peptide deformylase (172 aa).

Fe cation-binding residues include Cys92 and His134. Residue Glu135 is part of the active site. A Fe cation-binding site is contributed by His138.

Belongs to the polypeptide deformylase family. Fe(2+) serves as cofactor.

The enzyme catalyses N-terminal N-formyl-L-methionyl-[peptide] + H2O = N-terminal L-methionyl-[peptide] + formate. In terms of biological role, removes the formyl group from the N-terminal Met of newly synthesized proteins. Requires at least a dipeptide for an efficient rate of reaction. N-terminal L-methionine is a prerequisite for activity but the enzyme has broad specificity at other positions. The sequence is that of Peptide deformylase from Saccharophagus degradans (strain 2-40 / ATCC 43961 / DSM 17024).